Consider the following 409-residue polypeptide: Peptidase T (409 aa).

Residue H78 participates in Zn(2+) binding. D80 is an active-site residue. Position 140 (D140) interacts with Zn(2+). E174 (proton acceptor) is an active-site residue. 3 residues coordinate Zn(2+): E175, D197, and H379.

This sequence belongs to the peptidase M20B family. The cofactor is Zn(2+).

It is found in the cytoplasm. The catalysed reaction is Release of the N-terminal residue from a tripeptide.. Cleaves the N-terminal amino acid of tripeptides. This chain is Peptidase T, found in Aliivibrio fischeri (strain ATCC 700601 / ES114) (Vibrio fischeri).